A 103-amino-acid chain; its full sequence is Large ribosomal subunit protein bL21 (103 aa).

Belongs to the bacterial ribosomal protein bL21 family. Part of the 50S ribosomal subunit. Contacts protein L20.

This protein binds to 23S rRNA in the presence of protein L20. This Nitrosomonas europaea (strain ATCC 19718 / CIP 103999 / KCTC 2705 / NBRC 14298) protein is Large ribosomal subunit protein bL21.